The sequence spans 147 residues: 3-dehydroquinate dehydratase (147 aa).

Catalysis depends on tyrosine 23, which acts as the Proton acceptor. 3 residues coordinate substrate: asparagine 75, histidine 81, and aspartate 88. Histidine 101 acts as the Proton donor in catalysis. Residues 102-103 and arginine 112 each bind substrate; that span reads LS.

Belongs to the type-II 3-dehydroquinase family. In terms of assembly, homododecamer.

The enzyme catalyses 3-dehydroquinate = 3-dehydroshikimate + H2O. Its pathway is metabolic intermediate biosynthesis; chorismate biosynthesis; chorismate from D-erythrose 4-phosphate and phosphoenolpyruvate: step 3/7. Functionally, catalyzes a trans-dehydration via an enolate intermediate. The protein is 3-dehydroquinate dehydratase of Stutzerimonas stutzeri (strain A1501) (Pseudomonas stutzeri).